A 183-amino-acid polypeptide reads, in one-letter code: Archaemetzincin (183 aa).

Residue His131 coordinates Zn(2+). Glu132 (proton acceptor) is an active-site residue. Zn(2+) is bound by residues His135, His141, Cys142, Cys147, and Cys166.

It belongs to the peptidase M54 family. Monomer. The cofactor is Zn(2+).

Functionally, probable zinc metalloprotease whose natural substrate is unknown. The polypeptide is Archaemetzincin (Saccharolobus solfataricus (strain ATCC 35092 / DSM 1617 / JCM 11322 / P2) (Sulfolobus solfataricus)).